Consider the following 226-residue polypeptide: Ribose-5-phosphate isomerase A (226 aa).

Substrate contacts are provided by residues 33–36 (TGST), 86–89 (DGAD), and 99–102 (KGGG). Catalysis depends on glutamate 108, which acts as the Proton acceptor. Position 126 (lysine 126) interacts with substrate.

Belongs to the ribose 5-phosphate isomerase family. As to quaternary structure, homodimer.

The catalysed reaction is aldehydo-D-ribose 5-phosphate = D-ribulose 5-phosphate. Its pathway is carbohydrate degradation; pentose phosphate pathway; D-ribose 5-phosphate from D-ribulose 5-phosphate (non-oxidative stage): step 1/1. Catalyzes the reversible conversion of ribose-5-phosphate to ribulose 5-phosphate. This chain is Ribose-5-phosphate isomerase A, found in Bordetella pertussis (strain Tohama I / ATCC BAA-589 / NCTC 13251).